Reading from the N-terminus, the 520-residue chain is GMP synthase [glutamine-hydrolyzing] (520 aa).

The Glutamine amidotransferase type-1 domain maps to R8–D202. The Nucleophile role is filled by C86. Residues H177 and E179 contribute to the active site. One can recognise a GMPS ATP-PPase domain in the interval W203–R395. S230–S236 contacts ATP.

In terms of assembly, homodimer.

It catalyses the reaction XMP + L-glutamine + ATP + H2O = GMP + L-glutamate + AMP + diphosphate + 2 H(+). It functions in the pathway purine metabolism; GMP biosynthesis; GMP from XMP (L-Gln route): step 1/1. Functionally, catalyzes the synthesis of GMP from XMP. In Dinoroseobacter shibae (strain DSM 16493 / NCIMB 14021 / DFL 12), this protein is GMP synthase [glutamine-hydrolyzing].